The following is a 58-amino-acid chain: Small ribosomal subunit protein bS21 (58 aa).

This sequence belongs to the bacterial ribosomal protein bS21 family.

This is Small ribosomal subunit protein bS21 from Lactobacillus johnsonii (strain CNCM I-12250 / La1 / NCC 533).